A 311-amino-acid polypeptide reads, in one-letter code: Homoserine kinase (311 aa).

89-99 (PFARGLGSSAT) is an ATP binding site.

The protein belongs to the GHMP kinase family. Homoserine kinase subfamily.

It is found in the cytoplasm. The catalysed reaction is L-homoserine + ATP = O-phospho-L-homoserine + ADP + H(+). The protein operates within amino-acid biosynthesis; L-threonine biosynthesis; L-threonine from L-aspartate: step 4/5. Catalyzes the ATP-dependent phosphorylation of L-homoserine to L-homoserine phosphate. The polypeptide is Homoserine kinase (Halothermothrix orenii (strain H 168 / OCM 544 / DSM 9562)).